A 35-amino-acid polypeptide reads, in one-letter code: Photosystem II reaction center protein T (35 aa).

Residues 3–23 (ALVYTFLLVSTLGIIFFAIFF) traverse the membrane as a helical segment.

This sequence belongs to the PsbT family. PSII is composed of 1 copy each of membrane proteins PsbA, PsbB, PsbC, PsbD, PsbE, PsbF, PsbH, PsbI, PsbJ, PsbK, PsbL, PsbM, PsbT, PsbY, PsbZ, Psb30/Ycf12, at least 3 peripheral proteins of the oxygen-evolving complex and a large number of cofactors. It forms dimeric complexes.

It is found in the plastid. The protein resides in the chloroplast thylakoid membrane. Found at the monomer-monomer interface of the photosystem II (PS II) dimer, plays a role in assembly and dimerization of PSII. PSII is a light-driven water plastoquinone oxidoreductase, using light energy to abstract electrons from H(2)O, generating a proton gradient subsequently used for ATP formation. In Asarum canadense (Wild ginger), this protein is Photosystem II reaction center protein T.